Consider the following 124-residue polypeptide: SPbeta prophage-derived uncharacterized protein YoqO (124 aa).

A run of 2 helical transmembrane segments spans residues 54–74 and 88–108; these read LVVICLTFFVLALGIHKLLSF and VIFILQITLIIGSVAIAISIM.

It is found in the cell membrane. The protein is SPbeta prophage-derived uncharacterized protein YoqO (yoqO) of Bacillus subtilis (strain 168).